The sequence spans 485 residues: Proline betaine:corrinoid methyltransferase (485 aa).

Belongs to the trimethylamine methyltransferase family. In terms of assembly, the proline betaine:THF methyl transfer system is composed of two methyltransferases, MtpB and MtqA, and the corrinoid protein MtqC.

It carries out the reaction Co(I)-[quaternary-amine-specific corrinoid protein] + L-proline betaine + H(+) = methyl-Co(III)-[quaternary-amine-specific corrinoid protein] + N-methyl-L-proline. Its function is as follows. Involved in the degradation of the quaternary amine L-proline betaine. Component of a corrinoid-dependent methyltransferase system that transfers a methyl group from L-proline betaine to tetrahydrofolate (THF), forming methyl-THF, a key intermediate in the Wood-Ljungdahl acetogenesis pathway. MtpB catalyzes the methylation of the corrinoid protein MtqC, using L-proline betaine as the methyl donor. Shows weak activity with some other quaternary amines, including carnitine, phosphocholine, glycine betaine or betonicine, but cannot methylate free cob(I)alamin. In Eubacterium limosum, this protein is Proline betaine:corrinoid methyltransferase.